The following is a 309-amino-acid chain: Homoserine kinase (309 aa).

91–101 is a binding site for ATP; that stretch reads PIGSGLGSSAC.

It belongs to the GHMP kinase family. Homoserine kinase subfamily.

The protein resides in the cytoplasm. The enzyme catalyses L-homoserine + ATP = O-phospho-L-homoserine + ADP + H(+). It functions in the pathway amino-acid biosynthesis; L-threonine biosynthesis; L-threonine from L-aspartate: step 4/5. Catalyzes the ATP-dependent phosphorylation of L-homoserine to L-homoserine phosphate. This is Homoserine kinase (thrB) from Serratia marcescens.